A 274-amino-acid chain; its full sequence is Large ribosomal subunit protein uL2 (274 aa).

Disordered regions lie at residues E35–H60 and V224–K274. The span at T50–H60 shows a compositional bias: basic residues. The span at D229–V246 shows a compositional bias: basic and acidic residues.

The protein belongs to the universal ribosomal protein uL2 family. Part of the 50S ribosomal subunit. Forms a bridge to the 30S subunit in the 70S ribosome.

One of the primary rRNA binding proteins. Required for association of the 30S and 50S subunits to form the 70S ribosome, for tRNA binding and peptide bond formation. It has been suggested to have peptidyltransferase activity; this is somewhat controversial. Makes several contacts with the 16S rRNA in the 70S ribosome. The protein is Large ribosomal subunit protein uL2 of Delftia acidovorans (strain DSM 14801 / SPH-1).